Reading from the N-terminus, the 313-residue chain is Foldase protein PrsA (313 aa).

A signal peptide spans 1–20 (MKKKLLAGAITLLSVATLAA). Cysteine 21 carries the N-palmitoyl cysteine lipid modification. Cysteine 21 carries the S-diacylglycerol cysteine lipid modification. Positions 143–241 (TPDVTAQIIR…SQYYIVKLTK (99 aa)) constitute a PpiC domain.

Belongs to the PrsA family.

The protein localises to the cell membrane. It carries out the reaction [protein]-peptidylproline (omega=180) = [protein]-peptidylproline (omega=0). Functionally, plays a major role in protein secretion by helping the post-translocational extracellular folding of several secreted proteins. In Streptococcus pneumoniae serotype 4 (strain ATCC BAA-334 / TIGR4), this protein is Foldase protein PrsA.